We begin with the raw amino-acid sequence, 162 residues long: 2-C-methyl-D-erythritol 2,4-cyclodiphosphate synthase (162 aa).

Positions 12 and 14 each coordinate a divalent metal cation. 4-CDP-2-C-methyl-D-erythritol 2-phosphate-binding positions include 12 to 14 (DVH) and 38 to 39 (HS). Residue His46 participates in a divalent metal cation binding. 4-CDP-2-C-methyl-D-erythritol 2-phosphate-binding positions include 60-62 (DIG), 65-69 (FPDTD), and Arg146.

The protein belongs to the IspF family. In terms of assembly, homotrimer. A divalent metal cation is required as a cofactor.

The enzyme catalyses 4-CDP-2-C-methyl-D-erythritol 2-phosphate = 2-C-methyl-D-erythritol 2,4-cyclic diphosphate + CMP. It participates in isoprenoid biosynthesis; isopentenyl diphosphate biosynthesis via DXP pathway; isopentenyl diphosphate from 1-deoxy-D-xylulose 5-phosphate: step 4/6. Its function is as follows. Involved in the biosynthesis of isopentenyl diphosphate (IPP) and dimethylallyl diphosphate (DMAPP), two major building blocks of isoprenoid compounds. Catalyzes the conversion of 4-diphosphocytidyl-2-C-methyl-D-erythritol 2-phosphate (CDP-ME2P) to 2-C-methyl-D-erythritol 2,4-cyclodiphosphate (ME-CPP) with a corresponding release of cytidine 5-monophosphate (CMP). The sequence is that of 2-C-methyl-D-erythritol 2,4-cyclodiphosphate synthase from Bordetella avium (strain 197N).